Reading from the N-terminus, the 66-residue chain is Pancreatic polypeptide prohormone (66 aa).

Tyr-36 is subject to Tyrosine amide. A propeptide spanning residues 60 to 66 (ELSPMDV) is cleaved from the precursor.

Belongs to the NPY family.

The protein localises to the secreted. Hormone secreted by pancreatic cells that acts as a regulator of pancreatic and gastrointestinal functions probably by signaling through the G protein-coupled receptor NPY4R2. The polypeptide is Pancreatic polypeptide prohormone (PPY) (Felis catus (Cat)).